Reading from the N-terminus, the 301-residue chain is Glycine cleavage system transcriptional activator homolog (301 aa).

In terms of domain architecture, HTH lysR-type spans 10–67; the sequence is PPLNSLKSFESAARYLSFTKAADELCVTQAAVSHQIKLLEXFLGIDLFKRKNRSLELT. Positions 27 to 46 form a DNA-binding region, H-T-H motif; sequence FTKAADELCVTQAAVSHQIK.

The protein belongs to the LysR transcriptional regulatory family.

It localises to the cytoplasm. Its function is as follows. Not known, the gcv operon regulated by the E.coli homolog does not exist in H.influenzae, so it probably acts as a transcriptional regulator on some other operon. The chain is Glycine cleavage system transcriptional activator homolog (gcvA) from Haemophilus influenzae (strain ATCC 51907 / DSM 11121 / KW20 / Rd).